Consider the following 118-residue polypeptide: Non-specific lipid-transfer protein 1 (118 aa).

An N-terminal signal peptide occupies residues Met1–Ala25. 4 disulfides stabilise this stretch: Cys29-Cys76, Cys39-Cys53, Cys54-Cys99, and Cys74-Cys113.

This sequence belongs to the plant LTP family.

Functionally, plant non-specific lipid-transfer proteins transfer phospholipids as well as galactolipids across membranes. May play a role in wax or cutin deposition in the cell walls of expanding epidermal cells and certain secretory tissues. The protein is Non-specific lipid-transfer protein 1 of Lens culinaris (Lentil).